A 194-amino-acid chain; its full sequence is Fibroblast growth factor 7 (194 aa).

Residues 1 to 31 (MHKWILTWILPTLLYRSCFHIICLVGTISLA) form the signal peptide. N-linked (GlcNAc...) asparagine glycosylation is present at N45.

Belongs to the heparin-binding growth factors family. As to quaternary structure, interacts with FGFBP1. Interacts with FGFR2. Affinity between fibroblast growth factors (FGFs) and their receptors is increased by heparan sulfate glycosaminoglycans that function as coreceptors. Epithelial cell.

The protein resides in the secreted. Its function is as follows. Plays an important role in the regulation of embryonic development, cell proliferation and cell differentiation. Required for normal branching morphogenesis. Growth factor active on keratinocytes. Possible major paracrine effector of normal epithelial cell proliferation. In Homo sapiens (Human), this protein is Fibroblast growth factor 7 (FGF7).